Here is a 349-residue protein sequence, read N- to C-terminus: Sperm acrosomal protein FSA-ACR.1 (349 aa).

The N-terminal stretch at Met1–Gly8 is a signal peptide. A disordered region spans residues Met1–Ser265. Positions Thr63–Ser114 are enriched in basic and acidic residues. 2 stretches are compositionally biased toward polar residues: residues Gln117–Gln142 and Ser154–Glu171. Residues Pro178–Ser189 are compositionally biased toward basic and acidic residues. Positions Glu221 to Ala248 are enriched in low complexity. An N-linked (GlcNAc...) asparagine glycan is attached at Asn342.

The protein to acrosomal proteins SP-10. In terms of tissue distribution, testis.

It is found in the cytoplasmic vesicle. The protein localises to the secretory vesicle. Its subcellular location is the acrosome. This is Sperm acrosomal protein FSA-ACR.1 from Vulpes vulpes (Red fox).